Reading from the N-terminus, the 347-residue chain is NADH-ubiquinone oxidoreductase chain 2 (347 aa).

10 consecutive transmembrane segments (helical) span residues 13 to 33 (IVLG…WMGF), 59 to 79 (YFLT…INLV), 96 to 116 (IIMT…FWVP), 122 to 142 (ISLL…LSVL), 144 to 164 (VISP…SILI), 178 to 200 (ILAY…NPMM), 210 to 232 (LMTA…ALSH), 246 to 266 (IIML…KWMI), 276 to 296 (IILA…YMRL), and 326 to 346 (LPML…MILL).

Belongs to the complex I subunit 2 family. Core subunit of respiratory chain NADH dehydrogenase (Complex I) which is composed of 45 different subunits. Interacts with TMEM242.

It localises to the mitochondrion inner membrane. It carries out the reaction a ubiquinone + NADH + 5 H(+)(in) = a ubiquinol + NAD(+) + 4 H(+)(out). Its function is as follows. Core subunit of the mitochondrial membrane respiratory chain NADH dehydrogenase (Complex I) which catalyzes electron transfer from NADH through the respiratory chain, using ubiquinone as an electron acceptor. Essential for the catalytic activity and assembly of complex I. This chain is NADH-ubiquinone oxidoreductase chain 2, found in Rhynchonycteris naso (Brazilian long-nosed bat).